The sequence spans 418 residues: Tyrosine--tRNA ligase (418 aa).

Tyr34 lines the L-tyrosine pocket. The short motif at 39-48 (PTADSLHLGH) is the 'HIGH' region element. Tyr169 and Gln173 together coordinate L-tyrosine. The short motif at 229-233 (KFGKS) is the 'KMSKS' region element. Lys232 is a binding site for ATP. Positions 352-418 (LNIVEILVSS…GKKKYAVLTY (67 aa)) constitute an S4 RNA-binding domain.

It belongs to the class-I aminoacyl-tRNA synthetase family. TyrS type 1 subfamily. As to quaternary structure, homodimer.

The protein resides in the cytoplasm. It catalyses the reaction tRNA(Tyr) + L-tyrosine + ATP = L-tyrosyl-tRNA(Tyr) + AMP + diphosphate + H(+). In terms of biological role, catalyzes the attachment of tyrosine to tRNA(Tyr) in a two-step reaction: tyrosine is first activated by ATP to form Tyr-AMP and then transferred to the acceptor end of tRNA(Tyr). The protein is Tyrosine--tRNA ligase of Streptococcus uberis (strain ATCC BAA-854 / 0140J).